We begin with the raw amino-acid sequence, 221 residues long: Glutathione S-transferase U25 (221 aa).

The residue at position 2 (Ala-2) is an N-acetylalanine. Residues 3–82 (DEVILLDFWP…YIDEVWPSKT (80 aa)) enclose the GST N-terminal domain. Residues 13-14 (SM), 39-40 (NK), 53-54 (KI), and 66-67 (ES) contribute to the glutathione site. Residues 88–208 (DPYQRAQAKF…LPDSEKIIKF (121 aa)) form the GST C-terminal domain. Thr-149 bears the Phosphothreonine mark.

It belongs to the GST superfamily. Tau family.

Its subcellular location is the cytoplasm. It localises to the cytosol. The enzyme catalyses RX + glutathione = an S-substituted glutathione + a halide anion + H(+). Functionally, may be involved in the conjugation of reduced glutathione to a wide number of exogenous and endogenous hydrophobic electrophiles and have a detoxification role against certain herbicides. This Arabidopsis thaliana (Mouse-ear cress) protein is Glutathione S-transferase U25 (GSTU25).